The sequence spans 739 residues: Putative apoptosis-inducing factor 1, mitochondrial (739 aa).

The transit peptide at 1-42 (MSIWGVRCLTQRFIRQAYILANRRLLGPVPQRSPPAYAPLRP) directs the protein to the mitochondrion. Residues 257–564 (YLIIGGGTAA…ARRNLYVAGD (308 aa)) form an FAD-dependent oxidoreductase region. Residues 261 to 265 (GGGTA), Arg295, Lys300, Val358, Arg410, Asp564, and 580 to 581 (HH) each bind FAD. The segment at 644–681 (VDQLSESSDSDVPETSTSSSQSSKSDAGASQDGVTCDP) is disordered. Residues 656–676 (PETSTSSSQSSKSDAGASQDG) show a composition bias toward low complexity.

Belongs to the FAD-dependent oxidoreductase family. The cofactor is FAD.

It localises to the mitochondrion intermembrane space. It catalyses the reaction A + NADH + H(+) = AH2 + NAD(+). Its function is as follows. Probable NADH oxidoreductase. Mitochondrial effector of cell death that plays roles in developmentally regulated cell death and normal mitochondrial function. This is Putative apoptosis-inducing factor 1, mitochondrial (AIF) from Drosophila melanogaster (Fruit fly).